Reading from the N-terminus, the 561-residue chain is MRHCINCCIQLLPDGAHKQQVNCQGGPHHGHQACPTCKGENKILFRVDSKQMNLLAVLEVRTEGNENWGGFLRFKKGKRCSLVFGLIIMTLVMASYILSGAHQELLISSPFHYGGFPSNPSLMDSENPSDTKEHHHQSSVNNISYMKDYPSIKLIINSITTRIEFTTRQLPDLEDLKKQELHMFSVIPNKFLPNSKSPCWYEEFSGQNTTDPYLTNSYVLYSKRFRSTFDALRKAFWGHLAHAHGKHFRLRCLPHFYIIGQPKCGTTDLYDRLRLHPEVKFSAIKEPHWWTRKRFGIVRLRDGLRDRYPVEDYLDLFDLAAHQIHQGLQASSAKEQSKMNTIIIGEASASTMWDNNAWTFFYDNSTDGEPPFLTQDFIHAFQPNARLIVMLRDPVERLYSDYLYFASSNKSADDFHEKVTEALQLFENCMLDYSLRACVYNNTLNNAMPVRLQVGLYAVYLLDWLSVFDKQQFLILRLEDHASNVKYTMHKVFQFLNLGPLSEKQEALMTKSPASNARRPEDRNLGPMWPITQKILRDFYRPFNARLAQVLADEAFAWKTT.

At 1–80 (MRHCINCCIQ…FLRFKKGKRC (80 aa)) the chain is on the cytoplasmic side. A helical; Signal-anchor for type II membrane protein membrane pass occupies residues 81 to 101 (SLVFGLIIMTLVMASYILSGA). Topologically, residues 102–561 (HQELLISSPF…ADEAFAWKTT (460 aa)) are lumenal. 263-267 (KCGTT) contacts 3'-phosphoadenylyl sulfate. The N-linked (GlcNAc...) asparagine glycan is linked to N364. 2 residues coordinate 3'-phosphoadenylyl sulfate: R392 and S400.

The protein belongs to the sulfotransferase 1 family. Homodimer; disulfide-linked (Potential). The relevance of homodimerization is however unsure. May interact with phosphorylated proteins in resting B-cells, including HCK. A divalent metal cation serves as cofactor. It depends on glutathione as a cofactor. Post-translationally, glycosylated. Expressed in B-cell-enriched tissues but not in fetal or adult thymus. Expressed in fetal and adult spleen, lymph node, tonsil, bone marrow and peripheral leukocytes. Not expressed in T-cells. In pro-B, pre-B, and mature B-cell lines, it colocalizes with RAG1.

The protein resides in the golgi apparatus membrane. It catalyses the reaction dermatan 4'-sulfate + n 3'-phosphoadenylyl sulfate = dermatan 4',6'-bissulfate + n adenosine 3',5'-bisphosphate + n H(+). It carries out the reaction chondroitin 4'-sulfate + n 3'-phosphoadenylyl sulfate = chondroitin 4',6'-bissulfate + n adenosine 3',5'-bisphosphate + n H(+). Inhibited by phenyl beta-GalNAc(4,6-SO(4)). In terms of biological role, sulfotransferase that transfers sulfate from 3'-phosphoadenosine 5'-phosphosulfate (PAPS) to the C-6 hydroxyl group of the GalNAc 4-sulfate residue of chondroitin sulfate A and forms chondroitin sulfate E containing GlcA-GalNAc(4,6-SO(4)) repeating units. It also transfers sulfate to a unique non-reducing terminal sequence, GalNAc(4SO4)-GlcA(2SO4)-GalNAc(6SO4), to yield a highly sulfated structure similar to the structure found in thrombomodulin chondroitin sulfate. May also act as a B-cell receptor involved in BCR ligation-mediated early activation that mediate regulatory signals key to B-cell development and/or regulation of B-cell-specific RAG expression; however such results are unclear in vivo. The sequence is that of Carbohydrate sulfotransferase 15 (CHST15) from Homo sapiens (Human).